The sequence spans 428 residues: Adenylosuccinate synthetase (428 aa).

GTP-binding positions include Gly12–Lys18 and Gly40–Thr42. Asp13 (proton acceptor) is an active-site residue. Positions 13 and 40 each coordinate Mg(2+). IMP is bound by residues Asp13–Lys16, Asn38–His41, Thr128, Arg142, Gln223, Thr238, and Arg302. Catalysis depends on His41, which acts as the Proton donor. Thr298–Arg304 contacts substrate. Residues Arg304, Ser330–Asp332, and Ser412–Gly414 each bind GTP.

It belongs to the adenylosuccinate synthetase family. As to quaternary structure, homodimer. Mg(2+) is required as a cofactor.

It localises to the cytoplasm. The enzyme catalyses IMP + L-aspartate + GTP = N(6)-(1,2-dicarboxyethyl)-AMP + GDP + phosphate + 2 H(+). The protein operates within purine metabolism; AMP biosynthesis via de novo pathway; AMP from IMP: step 1/2. Functionally, plays an important role in the de novo pathway of purine nucleotide biosynthesis. Catalyzes the first committed step in the biosynthesis of AMP from IMP. The sequence is that of Adenylosuccinate synthetase from Shouchella clausii (strain KSM-K16) (Alkalihalobacillus clausii).